A 1374-amino-acid polypeptide reads, in one-letter code: DNA-directed RNA polymerase subunit beta (1374 aa).

The protein belongs to the RNA polymerase beta chain family. In terms of assembly, the RNAP catalytic core consists of 2 alpha, 1 beta, 1 beta' and 1 omega subunit. When a sigma factor is associated with the core the holoenzyme is formed, which can initiate transcription.

It catalyses the reaction RNA(n) + a ribonucleoside 5'-triphosphate = RNA(n+1) + diphosphate. Its function is as follows. DNA-dependent RNA polymerase catalyzes the transcription of DNA into RNA using the four ribonucleoside triphosphates as substrates. In Methylobacterium nodulans (strain LMG 21967 / CNCM I-2342 / ORS 2060), this protein is DNA-directed RNA polymerase subunit beta.